A 487-amino-acid chain; its full sequence is Probable Xaa-Pro aminopeptidase AFUB_014460 (487 aa).

Mn(2+)-binding residues include Asp267, Asp278, Glu416, and Glu455.

Belongs to the peptidase M24B family. Mn(2+) serves as cofactor.

It carries out the reaction Release of any N-terminal amino acid, including proline, that is linked to proline, even from a dipeptide or tripeptide.. Functionally, catalyzes the removal of a penultimate prolyl residue from the N-termini of peptides. The polypeptide is Probable Xaa-Pro aminopeptidase AFUB_014460 (Aspergillus fumigatus (strain CBS 144.89 / FGSC A1163 / CEA10) (Neosartorya fumigata)).